The primary structure comprises 318 residues: Probable casein kinase I homolog ECU11_1980 (318 aa).

A Protein kinase domain is found at 8 to 276 (YTICREIGKG…YLNSLLDKIF (269 aa)). Residues 14 to 22 (IGKGGFGKV) and K37 contribute to the ATP site. D129 acts as the Proton acceptor in catalysis.

This sequence belongs to the protein kinase superfamily. CK1 Ser/Thr protein kinase family. Casein kinase I subfamily.

It localises to the nucleus. It catalyses the reaction L-seryl-[protein] + ATP = O-phospho-L-seryl-[protein] + ADP + H(+). The enzyme catalyses L-threonyl-[protein] + ATP = O-phospho-L-threonyl-[protein] + ADP + H(+). In terms of biological role, involved in DNA repair. May regulate the activity of protein(s) involved in double strand break repair caused by gamma rays. In Encephalitozoon cuniculi (strain GB-M1) (Microsporidian parasite), this protein is Probable casein kinase I homolog ECU11_1980.